Reading from the N-terminus, the 357-residue chain is Peptide chain release factor 1 (357 aa).

N5-methylglutamine is present on Gln233.

The protein belongs to the prokaryotic/mitochondrial release factor family. Methylated by PrmC. Methylation increases the termination efficiency of RF1.

The protein localises to the cytoplasm. Its function is as follows. Peptide chain release factor 1 directs the termination of translation in response to the peptide chain termination codons UAG and UAA. The protein is Peptide chain release factor 1 of Flavobacterium psychrophilum (strain ATCC 49511 / DSM 21280 / CIP 103535 / JIP02/86).